The primary structure comprises 367 residues: GTP cyclohydrolase FolE2 (367 aa).

This sequence belongs to the GTP cyclohydrolase IV family.

It catalyses the reaction GTP + H2O = 7,8-dihydroneopterin 3'-triphosphate + formate + H(+). It participates in cofactor biosynthesis; 7,8-dihydroneopterin triphosphate biosynthesis; 7,8-dihydroneopterin triphosphate from GTP: step 1/1. Functionally, converts GTP to 7,8-dihydroneopterin triphosphate. In Ruegeria sp. (strain TM1040) (Silicibacter sp.), this protein is GTP cyclohydrolase FolE2.